The primary structure comprises 200 residues: Glycerol-3-phosphate acyltransferase (200 aa).

5 helical membrane passes run 4–24 (FALC…AVIV), 53–73 (WAAL…VWCG), 80–100 (QFEL…PIFF), 115–135 (IAPI…LVFV), and 138–158 (GYSS…VWWF).

The protein belongs to the PlsY family. As to quaternary structure, probably interacts with PlsX.

It localises to the cell inner membrane. It carries out the reaction an acyl phosphate + sn-glycerol 3-phosphate = a 1-acyl-sn-glycero-3-phosphate + phosphate. It participates in lipid metabolism; phospholipid metabolism. Its function is as follows. Catalyzes the transfer of an acyl group from acyl-phosphate (acyl-PO(4)) to glycerol-3-phosphate (G3P) to form lysophosphatidic acid (LPA). This enzyme utilizes acyl-phosphate as fatty acyl donor, but not acyl-CoA or acyl-ACP. The chain is Glycerol-3-phosphate acyltransferase from Actinobacillus succinogenes (strain ATCC 55618 / DSM 22257 / CCUG 43843 / 130Z).